We begin with the raw amino-acid sequence, 274 residues long: Large ribosomal subunit protein uL2 (274 aa).

Residues 224–274 (AMNPVDHPHGGGEGRTGEGQVPVSPWNTMTKGYRTRSNKRTQTFIVSRRKK) form a disordered region. Residues 229–239 (DHPHGGGEGRT) show a composition bias toward basic and acidic residues.

This sequence belongs to the universal ribosomal protein uL2 family. As to quaternary structure, part of the 50S ribosomal subunit. Forms a bridge to the 30S subunit in the 70S ribosome.

Functionally, one of the primary rRNA binding proteins. Required for association of the 30S and 50S subunits to form the 70S ribosome, for tRNA binding and peptide bond formation. It has been suggested to have peptidyltransferase activity; this is somewhat controversial. Makes several contacts with the 16S rRNA in the 70S ribosome. The sequence is that of Large ribosomal subunit protein uL2 from Methylibium petroleiphilum (strain ATCC BAA-1232 / LMG 22953 / PM1).